We begin with the raw amino-acid sequence, 291 residues long: Serine/threonine-protein phosphatase Pgam5, mitochondrial (291 aa).

A helical transmembrane segment spans residues 7–23 (FACGTGAGLAAFYLQRL). The interval 59–78 (KSLVRPQKNEQPQEQNRYNS) is disordered. The span at 67–77 (NEQPQEQNRYN) shows a compositional bias: polar residues.

It belongs to the phosphoglycerate mutase family. BPG-dependent PGAM subfamily. In terms of assembly, interacts with Pk92B/ASK1.

The protein localises to the mitochondrion outer membrane. The enzyme catalyses O-phospho-L-seryl-[protein] + H2O = L-seryl-[protein] + phosphate. It carries out the reaction O-phospho-L-threonyl-[protein] + H2O = L-threonyl-[protein] + phosphate. Its function is as follows. Displays phosphatase activity for serine/threonine residues, and dephosphorylates and activates Pk92B kinase. Has apparently no phosphoglycerate mutase activity. In Drosophila willistoni (Fruit fly), this protein is Serine/threonine-protein phosphatase Pgam5, mitochondrial.